The following is a 326-amino-acid chain: Tetraacyldisaccharide 4'-kinase (326 aa).

53–60 (SVGGNGKT) lines the ATP pocket.

This sequence belongs to the LpxK family.

It carries out the reaction a lipid A disaccharide + ATP = a lipid IVA + ADP + H(+). It participates in glycolipid biosynthesis; lipid IV(A) biosynthesis; lipid IV(A) from (3R)-3-hydroxytetradecanoyl-[acyl-carrier-protein] and UDP-N-acetyl-alpha-D-glucosamine: step 6/6. Functionally, transfers the gamma-phosphate of ATP to the 4'-position of a tetraacyldisaccharide 1-phosphate intermediate (termed DS-1-P) to form tetraacyldisaccharide 1,4'-bis-phosphate (lipid IVA). The chain is Tetraacyldisaccharide 4'-kinase from Actinobacillus pleuropneumoniae serotype 5b (strain L20).